The following is a 485-amino-acid chain: Glutamate--tRNA ligase (485 aa).

Positions 12–22 match the 'HIGH' region motif; sequence PSPTGYMHIGN. Residues 253-257 carry the 'KMSKS' region motif; it reads KLSKR. Lys-256 serves as a coordination point for ATP.

The protein belongs to the class-I aminoacyl-tRNA synthetase family. Glutamate--tRNA ligase type 1 subfamily. Monomer.

The protein localises to the cytoplasm. The catalysed reaction is tRNA(Glu) + L-glutamate + ATP = L-glutamyl-tRNA(Glu) + AMP + diphosphate. In terms of biological role, catalyzes the attachment of glutamate to tRNA(Glu) in a two-step reaction: glutamate is first activated by ATP to form Glu-AMP and then transferred to the acceptor end of tRNA(Glu). The protein is Glutamate--tRNA ligase of Clostridium acetobutylicum (strain ATCC 824 / DSM 792 / JCM 1419 / IAM 19013 / LMG 5710 / NBRC 13948 / NRRL B-527 / VKM B-1787 / 2291 / W).